Reading from the N-terminus, the 147-residue chain is Two-component response regulator ORR11 (147 aa).

The Response regulatory domain maps to 29–146; the sequence is HVLAVDDSSV…DVSRLFSRVL (118 aa). 4-aspartylphosphate is present on Asp-79.

This sequence belongs to the ARR family. Type-A subfamily. Two-component system major event consists of a His-to-Asp phosphorelay between a sensor histidine kinase (HK) and a response regulator (RR). In plants, the His-to-Asp phosphorelay involves an additional intermediate named Histidine-containing phosphotransfer protein (HPt). This multistep phosphorelay consists of a His-Asp-His-Asp sequential transfer of a phosphate group between first a His and an Asp of the HK protein, followed by the transfer to a conserved His of the HPt protein and finally the transfer to an Asp in the receiver domain of the RR protein.

Functionally, functions as a response regulator involved in His-to-Asp phosphorelay signal transduction system. Phosphorylation of the Asp residue in the receiver domain activates the ability of the protein to promote the transcription of target genes. Type-A response regulators seem to act as negative regulators of the cytokinin signaling. The polypeptide is Two-component response regulator ORR11 (Oryza sativa subsp. indica (Rice)).